A 285-amino-acid chain; its full sequence is Chitinase 4 (285 aa).

The N-terminal stretch at 1-27 (MAAKMATMVALVFGLALLLSAAAPAAA) is a signal peptide. A Chitin-binding type-1 domain is found at 28–62 (QNCGCQDGYCCSQWGYCGTTEAYCGQGCQSGPCWG). Disulfide bonds link cysteine 30–cysteine 38, cysteine 32–cysteine 44, cysteine 37–cysteine 51, cysteine 55–cysteine 60, cysteine 104–cysteine 153, cysteine 166–cysteine 175, and cysteine 253–cysteine 285. Glutamate 148 acts as the Proton donor in catalysis.

Belongs to the glycosyl hydrolase 19 family. Chitinase class IV subfamily. In terms of tissue distribution, expressed at low levels in leaves, sheaths and meristems.

It carries out the reaction Random endo-hydrolysis of N-acetyl-beta-D-glucosaminide (1-&gt;4)-beta-linkages in chitin and chitodextrins.. Functionally, hydrolyzes chitin and may function in reproductive organs during embryogenesis and seed maturation. In Oryza sativa subsp. japonica (Rice), this protein is Chitinase 4 (Cht4).